The following is a 210-amino-acid chain: MASMGLQVLGISLAVLGWLGIILSCALPMWRVTAFIGSNIVTAQTSWEGLWMNCVVQSTGQMQCKMYDSMLALPQDLQAARALMVISIIVGALGMLLSVVGGKCTNCMEDETVKAKIMITAGAVFIVASMLIMVPVSWTAHNVIRDFYNPMVASGQKREMGASLYVGWAASGLLLLGGGLLCCSCPPRSNDKPYSAKYSAARSVPASNYV.

The Cytoplasmic portion of the chain corresponds to 1–7 (MASMGLQ). An interaction with EPHA2 region spans residues 1–103 (MASMGLQVLG…GMLLSVVGGK (103 aa)). The chain crosses the membrane as a helical span at residues 8-28 (VLGISLAVLGWLGIILSCALP). Residues 29-81 (MWRVTAFIGSNIVTAQTSWEGLWMNCVVQSTGQMQCKMYDSMLALPQDLQAAR) lie on the Extracellular side of the membrane. Cysteine 54 and cysteine 64 are oxidised to a cystine. A helical membrane pass occupies residues 82 to 102 (ALMVISIIVGALGMLLSVVGG). Topologically, residues 103–116 (KCTNCMEDETVKAK) are cytoplasmic. Residues 117–137 (IMITAGAVFIVASMLIMVPVS) traverse the membrane as a helical segment. Residues 138–160 (WTAHNVIRDFYNPMVASGQKREM) lie on the Extracellular side of the membrane. A helical membrane pass occupies residues 161 to 181 (GASLYVGWAASGLLLLGGGLL). The Cytoplasmic portion of the chain corresponds to 182-210 (CCSCPPRSNDKPYSAKYSAARSVPASNYV). Tyrosine 209 carries the phosphotyrosine; by EPHA2 modification. Residues 209 to 210 (YV) form an interactions with TJP1, TJP2 and TJP3 region.

The protein belongs to the claudin family. Can form heteropolymeric strands with other claudins. Interacts with CLDN8. Interacts with CLDN1. Directly interacts with TJP1/ZO-1, TJP2/ZO-2 and TJP3/ZO-3. Interacts with EPHA2; phosphorylates CLDN4 and may regulate tight junctions. Phosphorylated. Phosphorylation by EPHA2 is stimulated by EFNA1 and alters interaction with TJP1. In terms of tissue distribution, expressed primarily in lung and kidney. Present in both cortical and medullar collecting ducts (at protein level).

It localises to the cell junction. It is found in the tight junction. The protein resides in the cell membrane. It carries out the reaction chloride(in) = chloride(out). It catalyses the reaction bromide(in) = bromide(out). The catalysed reaction is iodide(out) = iodide(in). The enzyme catalyses fluoride(in) = fluoride(out). Functionally, can associate with other claudins to regulate tight junction structural and functional strand dynamics. May coassemble with CLDN8 into tight junction strands containing anion-selective channels that convey paracellular chloride permeability in renal collecting ducts. May integrate into CLDN3 strands to modulate localized tight junction barrier properties. May disrupt strand assembly of channel-forming CLDN2 and CLDN15 and inhibit cation conductance. Cannot form tight junction strands on its own. The polypeptide is Claudin-4 (Mus musculus (Mouse)).